Here is a 790-residue protein sequence, read N- to C-terminus: Kinesin-like protein KIN-14D (790 aa).

2 disordered regions span residues 1–56 (MPLR…DVGS) and 116–139 (DKEN…LDAK). A globular region spans residues 1–66 (MPLRNQNRAP…TEECGKVEFT (66 aa)). Residues 16–33 (VKKEALSSIPFDKRRKET) are compositionally biased toward basic and acidic residues. Positions 34 to 55 (QGTGRRQVLSTVNRQDANSDVG) are enriched in polar residues. 2 coiled-coil regions span residues 117–316 (KENL…HVVQ) and 347–426 (SLEE…LELK). A compositionally biased stretch (basic and acidic residues) spans 127-139 (AEKRYSDKELDAK). The Kinesin motor domain occupies 428–769 (NIRVFCRVRP…LRFAARVNAC (342 aa)). 513–520 (GQTGSGKT) contributes to the ATP binding site.

It belongs to the TRAFAC class myosin-kinesin ATPase superfamily. Kinesin family. KIN-14 subfamily. As to expression, slightly expressed in anther lobes with pollen mother cells at anther stage 5. Strongly expressed at anther stage 6 in the tapetum and meiotic cells. Also detected in the gynoecium and the ovule.

It is found in the cytoplasm. Its subcellular location is the cytoskeleton. The protein resides in the phragmoplast. Its function is as follows. Kinesin that supports microtubule movement in an ATP-dependent manner and that functions as a minus-end directed motor as well as a plus-end tracking protein. During mitosis, is involved in early spindle assembly. Participates in the capture of antiparallel interpolar microtubules and helps in generating force to coalign microtubules. The protein is Kinesin-like protein KIN-14D of Arabidopsis thaliana (Mouse-ear cress).